Consider the following 239-residue polypeptide: Small ribosomal subunit protein uS2 (239 aa).

The protein belongs to the universal ribosomal protein uS2 family.

The polypeptide is Small ribosomal subunit protein uS2 (Francisella tularensis subsp. tularensis (strain FSC 198)).